The following is a 91-amino-acid chain: Acylphosphatase (91 aa).

Residues W5–F91 form the Acylphosphatase-like domain. Active-site residues include R20 and N38.

The protein belongs to the acylphosphatase family.

It carries out the reaction an acyl phosphate + H2O = a carboxylate + phosphate + H(+). This is Acylphosphatase (acyP) from Fervidobacterium nodosum (strain ATCC 35602 / DSM 5306 / Rt17-B1).